The sequence spans 418 residues: AA11 family lytic polysaccharide monooxygenase B (418 aa).

The first 21 residues, 1–21, serve as a signal peptide directing secretion; sequence MMFSKSGLVAVAMLGASAVEA. Residues histidine 22 and histidine 82 each coordinate Cu(+). Disulfide bonds link cysteine 50/cysteine 165, cysteine 87/cysteine 113, and cysteine 206/cysteine 240. N-linked (GlcNAc...) asparagine glycosylation is found at asparagine 120 and asparagine 134. A disordered region spans residues 226–345; that stretch reads DGNPSNLQPA…SSSSSNGALT (120 aa). Over residues 254–345 the composition is skewed to low complexity; the sequence is SPSTPSTSSS…SSSSSNGALT (92 aa).

The protein belongs to the polysaccharide monooxygenase AA11 family. Requires Cu(2+) as cofactor.

It localises to the secreted. Functionally, lytic polysaccharide monooxygenase (LPMO)-like protein that acts as a strict peroxygenase and does not catalyze a monooxygenase reaction. It is indeed hardly active on chitin, while being very active on soluble oligomers of N-acetylglucosamine. Cleaves the glycosidic bonds byoxidizing the C1 position. Also unable to oxidize cellopentaose. Probably breaks glycosidic bonds in non-polymeric substrates possibly carbohydrates in the cell wall of the fungus or its competitors. In the presence of chitotetraose, the enzyme can withstand considerable amounts of H(2)O(2), which it uses to efficiently and stoichiometrically convert this substrate. The chain is AA11 family lytic polysaccharide monooxygenase B from Aspergillus fumigatus (strain ATCC MYA-4609 / CBS 101355 / FGSC A1100 / Af293) (Neosartorya fumigata).